A 580-amino-acid polypeptide reads, in one-letter code: Efflux pump dotC (580 aa).

Positions 1-34 are enriched in basic and acidic residues; it reads MSEDHTKADNLSEKDPHSPERSDSSSHEDAHARE. The interval 1 to 45 is disordered; sequence MSEDHTKADNLSEKDPHSPERSDSSSHEDAHAREEEESSDDDGAL. N10 carries an N-linked (GlcNAc...) asparagine glycan. Acidic residues predominate over residues 35–44; sequence EEESSDDDGA. Residues 49 to 69 form a helical membrane-spanning segment; the sequence is PASLIAIVMIALSLAVFLSAL. An N-linked (GlcNAc...) asparagine glycan is attached at N86. 13 consecutive transmembrane segments (helical) span residues 89 to 109, 127 to 147, 153 to 173, 181 to 201, 209 to 229, 242 to 262, 275 to 295, 318 to 338, 348 to 368, 380 to 400, 409 to 429, 444 to 466, and 519 to 539; these read AAYTWVGSAYLLANAASTPIW, ALFMIGSLVCALSINVGMLIT, GAAGGGLLTLVDTIIGDLFSL, GMIGGVWAIACALGPIVGGAF, WCFYINLPIDGLAFGIIFFFL, FAAIDWAGSFFIIGGTLMFLF, SATVICLLVFGVVCIVLFGLV, ALLVAFFHSFVFISAFYYLPL, PILAGVYILPAVLSTGVSAAA, LIPMYFGMSMMILGYGLLINF, LIIYQLIAGIGNGPNFQAPLV, TATFNFVRNIATAISVVAGQVLY, and SPMWIMYTAFAAAGLFCILLV. Residues 559-580 form a disordered region; the sequence is KKAEAERKAERQAKDLEKAQKS.

The protein belongs to the major facilitator superfamily. TCR/Tet family.

The protein localises to the cell membrane. It localises to the vacuole membrane. In terms of biological role, efflux pump; part of the gene cluster that mediates the biosynthesis of dothistromin (DOTH), a polyketide toxin very similar in structure to the aflatoxin precursor, versicolorin B. One function of dotC may be to transport early-stage dothistromin biosynthetic intermediates from the cytoplasm into vacuoles, thereby affecting the rate of dothistromin production. This Dothistroma septosporum (strain NZE10 / CBS 128990) (Red band needle blight fungus) protein is Efflux pump dotC.